A 503-amino-acid chain; its full sequence is Aromatase (503 aa).

2 consecutive transmembrane segments (helical) span residues 19 to 39 (EVMP…FFVW) and 51 to 71 (GYCM…MGLG). Residues 294 to 324 (ENVNQCILEMMIAAPDTLSVTVFFMLCLIAQ) are substrate-binding pocket. Aspartate 309 and methionine 374 together coordinate substrate. A heme-binding site is contributed by cysteine 437.

Belongs to the cytochrome P450 family. It depends on heme as a cofactor. In terms of tissue distribution, expressed in placenta. Highly expressed in follicles (0 hour:hCG), followed by a drop (12-24 hour:hCG) and by an increase (30-39 hour:hCG). Highly expressed in corpora lutea. Also expressed in granulosa cell layer. Not expressed in theca interna.

The protein resides in the endoplasmic reticulum membrane. The protein localises to the microsome membrane. It catalyses the reaction testosterone + 3 reduced [NADPH--hemoprotein reductase] + 3 O2 = 17beta-estradiol + formate + 3 oxidized [NADPH--hemoprotein reductase] + 4 H2O + 4 H(+). The enzyme catalyses androst-4-ene-3,17-dione + 3 reduced [NADPH--hemoprotein reductase] + 3 O2 = estrone + formate + 3 oxidized [NADPH--hemoprotein reductase] + 4 H2O + 4 H(+). The catalysed reaction is androst-4-ene-3,17-dione + reduced [NADPH--hemoprotein reductase] + O2 = 19-hydroxyandrost-4-ene-3,17-dione + oxidized [NADPH--hemoprotein reductase] + H2O + H(+). It carries out the reaction 19-hydroxyandrost-4-ene-3,17-dione + reduced [NADPH--hemoprotein reductase] + O2 = 19-oxo-androst-4-ene-3,17-dione + oxidized [NADPH--hemoprotein reductase] + 2 H2O + H(+). It catalyses the reaction 19-oxo-androst-4-ene-3,17-dione + reduced [NADPH--hemoprotein reductase] + O2 = estrone + formate + oxidized [NADPH--hemoprotein reductase] + H2O + 2 H(+). The enzyme catalyses estrone + reduced [NADPH--hemoprotein reductase] + O2 = 2-hydroxyestrone + oxidized [NADPH--hemoprotein reductase] + H2O + H(+). The catalysed reaction is 17beta-hydroxy-5alpha-androstan-3-one + reduced [NADPH--hemoprotein reductase] + O2 = 17beta,19-dihydroxy-3-oxo-5alpha-androstanone + oxidized [NADPH--hemoprotein reductase] + H2O + H(+). It carries out the reaction 17beta,19-dihydroxy-3-oxo-5alpha-androstanone + reduced [NADPH--hemoprotein reductase] + O2 = 17beta-hydroxy-3,19-dioxo-5alpha-androstanone + oxidized [NADPH--hemoprotein reductase] + 2 H2O + H(+). It catalyses the reaction 17beta-hydroxy-3,19-dioxo-5alpha-androstanone + reduced [NADPH--hemoprotein reductase] + O2 = 17beta-hydroxy-3-oxo-19-nor-5alpha-androst-1-ene + formate + oxidized [NADPH--hemoprotein reductase] + H2O + 2 H(+). It participates in steroid hormone biosynthesis. In terms of biological role, a cytochrome P450 monooxygenase that catalyzes the conversion of C19 androgens, androst-4-ene-3,17-dione (androstenedione) and testosterone to the C18 estrogens, estrone and estradiol, respectively. Catalyzes three successive oxidations of C19 androgens: two conventional oxidations at C19 yielding 19-hydroxy and 19-oxo/19-aldehyde derivatives, followed by a third oxidative aromatization step that involves C1-beta hydrogen abstraction combined with cleavage of the C10-C19 bond to yield a phenolic A ring and formic acid. Alternatively, the third oxidative reaction yields a 19-norsteroid and formic acid. Converts dihydrotestosterone to delta1,10-dehydro 19-nordihydrotestosterone and may play a role in homeostasis of this potent androgen. Also displays 2-hydroxylase activity toward estrone. Mechanistically, uses molecular oxygen inserting one oxygen atom into a substrate, and reducing the second into a water molecule, with two electrons provided by NADPH via cytochrome P450 reductase (CPR; NADPH-ferrihemoprotein reductase). The chain is Aromatase (CYP19A1) from Equus caballus (Horse).